The following is a 212-amino-acid chain: MKPFKKFTSRVVPLDRANVDTDAIIPKQFLKSIRRSGFGPYLFDEWRYLDRGEPDMDCSHRPLNPEFVLNLPCYAGARILLARKNFGCGSSREHAPWALEDYGFRAIIAPSFADIFYNNCFKNGILPIVLDEATVDRLFSEAGPGFELTVDLESQTVATPFGETFHFDVDASRKHRLLNGLDDIGLTLQHADAIRAYEAARRKSAPWLFAVP.

This sequence belongs to the LeuD family. LeuD type 1 subfamily. Heterodimer of LeuC and LeuD.

The enzyme catalyses (2R,3S)-3-isopropylmalate = (2S)-2-isopropylmalate. Its pathway is amino-acid biosynthesis; L-leucine biosynthesis; L-leucine from 3-methyl-2-oxobutanoate: step 2/4. In terms of biological role, catalyzes the isomerization between 2-isopropylmalate and 3-isopropylmalate, via the formation of 2-isopropylmaleate. This chain is 3-isopropylmalate dehydratase small subunit, found in Methylococcus capsulatus (strain ATCC 33009 / NCIMB 11132 / Bath).